The chain runs to 575 residues: Alpha-(1,6)-fucosyltransferase (575 aa).

Over 1–9 (MRAWTGSWR) the chain is Cytoplasmic. The chain crosses the membrane as a helical; Signal-anchor for type II membrane protein span at residues 10-30 (WIMLILFAWGTLLFYIGGHLV). The Lumenal segment spans residues 31 to 575 (RDNDHPDHSS…KYPTYPEAEK (545 aa)). Intrachain disulfides connect Cys204–Cys266, Cys212–Cys230, and Cys218–Cys222. Positions 206 to 493 (KARKLVCNIN…PDASANFHSL (288 aa)) constitute a GT23 domain. Ser278 carries the post-translational modification Phosphoserine. The short motif at 299 to 305 (PRPPYLP) is the SH3-binding element. An important for donor substrate binding region spans residues 365 to 366 (RR). Cysteines 465 and 472 form a disulfide. Positions 502–563 (QNAHNQIAVY…PSYKVREKIE (62 aa)) constitute an SH3 domain.

It belongs to the glycosyltransferase 23 family. In terms of processing, tyrosine phosphorylated by PKDCC/VLK.

The protein localises to the golgi apparatus. Its subcellular location is the golgi stack membrane. It carries out the reaction N(4)-{beta-D-GlcNAc-(1-&gt;2)-alpha-D-Man-(1-&gt;3)-[beta-D-GlcNAc-(1-&gt;2)-alpha-D-Man-(1-&gt;6)]-beta-D-Man-(1-&gt;4)-beta-D-GlcNAc-(1-&gt;4)-beta-D-GlcNAc}-L-asparaginyl-[protein] + GDP-beta-L-fucose = an N(4)-{beta-D-GlcNAc-(1-&gt;2)-alpha-D-Man-(1-&gt;3)-[beta-D-GlcNAc-(1-&gt;2)-alpha-D-Man-(1-&gt;6)]-beta-D-Man-(1-&gt;4)-beta-D-GlcNAc-(1-&gt;4)-[alpha-L-Fuc-(1-&gt;6)]-beta-D-GlcNAc}-L-asparaginyl-[protein] + GDP + H(+). It functions in the pathway protein modification; protein glycosylation. In terms of biological role, catalyzes the addition of fucose in alpha 1-6 linkage to the first GlcNAc residue, next to the peptide chains in N-glycans. The chain is Alpha-(1,6)-fucosyltransferase (Fut8) from Rattus norvegicus (Rat).